A 354-amino-acid polypeptide reads, in one-letter code: MKKIIFTGGGSAGHVTPNLAIINELNDKDWSIAYIGSYEGIERQLVEKAGIRYFGISSGKLRRYMDWKNVTDIARIANGFRQARKILKAEKPDVVFSKGGFVTVPVVAAAYTLRIPVHLHESDLTPGLANRLAKRFANTFYTSFAETAAHFPKEATTTVGSPIRRELLEGSRIQGLTITDFSRERPTLLVMGGSLGAKRINEAIRESLDTLTNTYQIIHICGKGHLDPALEGRRNYKQYEYVHDELPHFLQAADLVVTRGGSNAIFEFLALHIPMLIIPLSRAQSRGDQILNAQTFVKNGYARMLEEENLTKETLQQEVQELYNGRQTYIEAMNASQATNAVAYITEKLEQEVQ.

UDP-N-acetyl-alpha-D-glucosamine contacts are provided by residues 11-13 (SAG), Arg164, Ser194, and Gln289.

The protein belongs to the glycosyltransferase 28 family. MurG subfamily.

The protein localises to the cell membrane. The catalysed reaction is di-trans,octa-cis-undecaprenyl diphospho-N-acetyl-alpha-D-muramoyl-L-alanyl-D-glutamyl-meso-2,6-diaminopimeloyl-D-alanyl-D-alanine + UDP-N-acetyl-alpha-D-glucosamine = di-trans,octa-cis-undecaprenyl diphospho-[N-acetyl-alpha-D-glucosaminyl-(1-&gt;4)]-N-acetyl-alpha-D-muramoyl-L-alanyl-D-glutamyl-meso-2,6-diaminopimeloyl-D-alanyl-D-alanine + UDP + H(+). Its pathway is cell wall biogenesis; peptidoglycan biosynthesis. Functionally, cell wall formation. Catalyzes the transfer of a GlcNAc subunit on undecaprenyl-pyrophosphoryl-MurNAc-pentapeptide (lipid intermediate I) to form undecaprenyl-pyrophosphoryl-MurNAc-(pentapeptide)GlcNAc (lipid intermediate II). The chain is UDP-N-acetylglucosamine--N-acetylmuramyl-(pentapeptide) pyrophosphoryl-undecaprenol N-acetylglucosamine transferase from Shouchella clausii (strain KSM-K16) (Alkalihalobacillus clausii).